The primary structure comprises 164 residues: Phosphopantetheine adenylyltransferase (164 aa).

Ser-9 is a binding site for substrate. Residues 9–10 (SF) and His-17 contribute to the ATP site. The substrate site is built by Lys-41, Leu-73, and Lys-87. ATP-binding positions include 88–90 (GLR), Glu-98, and 123–129 (YSYLSSS).

This sequence belongs to the bacterial CoaD family. In terms of assembly, homohexamer. The cofactor is Mg(2+).

It is found in the cytoplasm. The enzyme catalyses (R)-4'-phosphopantetheine + ATP + H(+) = 3'-dephospho-CoA + diphosphate. It functions in the pathway cofactor biosynthesis; coenzyme A biosynthesis; CoA from (R)-pantothenate: step 4/5. Functionally, reversibly transfers an adenylyl group from ATP to 4'-phosphopantetheine, yielding dephospho-CoA (dPCoA) and pyrophosphate. This chain is Phosphopantetheine adenylyltransferase, found in Clostridium botulinum (strain Okra / Type B1).